We begin with the raw amino-acid sequence, 290 residues long: Phosphoribulokinase (290 aa).

12 to 20 (GSSGAGTTS) lines the ATP pocket.

This sequence belongs to the phosphoribulokinase family.

The enzyme catalyses D-ribulose 5-phosphate + ATP = D-ribulose 1,5-bisphosphate + ADP + H(+). It participates in carbohydrate biosynthesis; Calvin cycle. The polypeptide is Phosphoribulokinase (cbbP) (Nitrobacter vulgaris).